We begin with the raw amino-acid sequence, 133 residues long: MGKKTFREWQYFKLSITSFDQDVDDAHAIDQMTWRQWLNNALKRSYGIFGEGVEYSFLHVDDKLAYIRVNHADKDTFSSSISTYISTDELVGSPLTVSILQESSSLRLLEVTDDDRLWLKKVMEEEEQDCKCI.

Component of nuclear RNase P and RNase MRP complexes. RNase P consists of an RNA moiety and at least 9 protein subunits including POP1, POP3, POP4, POP5, POP6, POP7, POP8, RPP1 and RPR2. RNase MRP complex consists of an RNA moiety and at least 10 protein subunits including POP1, POP3, POP4, POP5, POP6, POP7, POP8, RMP1, RPP1 and SNM1, many of which are shared with the RNase P complex.

It is found in the nucleus. The catalysed reaction is Endonucleolytic cleavage of RNA, removing 5'-extranucleotides from tRNA precursor.. Its function is as follows. Component of ribonuclease P, a protein complex that generates mature tRNA molecules by cleaving their 5'-ends. Also a component of RNase MRP, which cleaves pre-rRNA sequences. The protein is Ribonucleases P/MRP protein subunit POP8 (POP8) of Saccharomyces cerevisiae (strain ATCC 204508 / S288c) (Baker's yeast).